The sequence spans 602 residues: Bifunctional xylanase/deacetylase (602 aa).

The N-terminal stretch at 1–14 (MSATLLVPSMTVKA) is a signal peptide. Residues 17-211 (TIYNNKTGNQ…SSGSASVYKN (195 aa)) form the GH11 domain. The active-site Nucleophile is glutamate 108. Residue glutamate 198 is the Proton donor of the active site. The interval 216–240 (GGSSSSSGNQGGNQGGNTGNENAGN) is disordered. A compositionally biased stretch (gly residues) spans 224–233 (NQGGNQGGNT). The CBM6 domain occupies 249–366 (DKIQCETMTK…DAYLDYFNNS (118 aa)). The region spanning 402–578 (KLIALTFDDG…GLKNQGYTFV (177 aa)) is the NodB homology domain.

Belongs to the glycosyl hydrolase 11 (cellulase G) family. In terms of processing, in the later growth phases, seems to undergo a proteolytic cleavage into a 30 kDa protein possessing xylanolytic activity.

Its subcellular location is the secreted. It catalyses the reaction Endohydrolysis of (1-&gt;4)-beta-D-xylosidic linkages in xylans.. It participates in glycan degradation; xylan degradation. In terms of biological role, endo-acting xylanase which specifically cleaves internal linkages on the xylan backbone, releasing xylooligosaccharides. Is also probably able, via its C-terminal domain, to remove acetyl groups from acetylated xylan, and thus it is probably capable of hydrolyzing acetylated xylan. This chain is Bifunctional xylanase/deacetylase (xyn11A), found in Pseudobutyrivibrio xylanivorans.